Consider the following 319-residue polypeptide: Phosphoenolpyruvate transferase (319 aa).

A 7,8-didemethyl-8-hydroxy-5-deazariboflavin-binding site is contributed by aspartate 50.

Belongs to the CofD family. Homodimer. The cofactor is Mg(2+).

It carries out the reaction enolpyruvoyl-2-diphospho-5'-guanosine + 7,8-didemethyl-8-hydroxy-5-deazariboflavin = dehydro coenzyme F420-0 + GMP + H(+). It functions in the pathway cofactor biosynthesis; coenzyme F420 biosynthesis. Catalyzes the transfer of the phosphoenolpyruvate moiety from enoylpyruvoyl-2-diphospho-5'-guanosine (EPPG) to 7,8-didemethyl-8-hydroxy-5-deazariboflavin (FO) with the formation of dehydro coenzyme F420-0 and GMP. The sequence is that of Phosphoenolpyruvate transferase from Streptomyces coelicolor (strain ATCC BAA-471 / A3(2) / M145).